Consider the following 239-residue polypeptide: Superoxide dismutase [Mn] 3 (239 aa).

The segment covering 1–19 (ASTQQTPAQSPTASPTVST) has biased composition (polar residues). A disordered region spans residues 1–20 (ASTQQTPAQSPTASPTVSTP). A signal peptide spans 1–30 (ASTQQTPAQSPTASPTVSTPVAYVDRPLTA). His-57, His-112, Asp-195, and His-199 together coordinate Mn(2+).

Belongs to the iron/manganese superoxide dismutase family. Homodimer. Mn(2+) serves as cofactor.

It carries out the reaction 2 superoxide + 2 H(+) = H2O2 + O2. Functionally, destroys superoxide anion radicals which are normally produced within the cells and which are toxic to biological systems. The sequence is that of Superoxide dismutase [Mn] 3 (sodA3) from Leptolyngbya boryana (Plectonema boryanum).